Consider the following 284-residue polypeptide: Tropomyosin (284 aa).

Positions 1 to 54 are disordered; that stretch reads MDAIKKKMQAMKLEKDNAMDRADTLEQQNKEANNRAEKTEEEIRATQKKMQQVE. The stretch at 1–273 forms a coiled coil; that stretch reads MDAIKKKMQA…KEKYKSITDE (273 aa). The segment covering 12-45 has biased composition (basic and acidic residues); the sequence is KLEKDNAMDRADTLEQQNKEANNRAEKTEEEIRA.

It belongs to the tropomyosin family. Homodimer. As to expression, muscle (at protein level). Expressed in leg and chest protection muscle (at protein level). Expressed in claw muscle.

In terms of biological role, tropomyosin, in association with the troponin complex, plays a central role in the calcium dependent regulation of muscle contraction. The sequence is that of Tropomyosin from Eriocheir sinensis (Chinese mitten crab).